The following is an 840-amino-acid chain: Aconitase AMT8 (840 aa).

D258–H260 contacts substrate. [4Fe-4S] cluster is bound by residues C450, C513, and C516. Substrate contacts are provided by residues R536, R541, and S709 to R710.

It belongs to the aconitase/IPM isomerase family.

It functions in the pathway mycotoxin biosynthesis. Functionally, aconitase; part of the gene clusters that mediate the biosynthesis of AM-toxins, host-selective toxins (HSTs) causing Alternaria blotch on apple, a worldwide distributed disease. AM-toxins are cyclic depsipeptides containing the 3 residues 2-hydroxy-isovaleric acid (2-HIV), dehydroalanine, L-alanine which are common for all 3 AM-toxins I to III. The fourth precursor is L-alpha-amino-methoxyphenyl-valeric acid (L-Amv) for AM-toxin I, L-alpha-amino-phenyl-valeric acid (L-Apv) for AM-toxin II, and L-alpha-amino-hydroxyphenyl-valeric acid (L-Ahv) for AM-toxin III. AM-toxins have two target sites for affecting susceptible apple cells; they cause invagination of the plasma membrane and electrolyte loss and chloroplast disorganization. The non-ribosomal peptide synthetase AMT1 contains 4 catalytic modules and is responsible for activation of each residue in AM-toxin. The aldo-keto reductase AMT2 catalyzes the conversion of 2-keto-isovaleric acid (2-KIV) to 2-hydroxy-isovaleric acid (2-HIV), one of the precursor residues incorporated by AMT1 during AM-toxin biosynthesis, by reduction of its ketone to an alcohol. The cytochrome P450 monooxygenase AMT3 and the thioesterase AMT4 are also important for AM-toxin production, but their exact function within the AM-toxin biosynthesis are not known yet. Up to 21 proteins (including AMT1 to AMT4) are predicted to be involved in AM-toxin biosynthesis since their expression ishighly up-regulated in AM-toxin-producing cultures. This chain is Aconitase AMT8, found in Alternaria alternata (Alternaria rot fungus).